The chain runs to 55 residues: Potassium channel toxin alpha-KTx 17.1 (55 aa).

Positions methionine 1 to alanine 23 are cleaved as a signal peptide. Position 24 is a pyrrolidone carboxylic acid (glutamine 24). Cystine bridges form between cysteine 27/cysteine 43, cysteine 33/cysteine 48, and cysteine 37/cysteine 50. Threonine amide is present on threonine 53.

Belongs to the short scorpion toxin superfamily. Potassium channel inhibitor family. Alpha-KTx 17 subfamily. As to expression, expressed by the venom gland.

It localises to the secreted. In terms of biological role, blocker of potassium channels, which inhibits both the delayed rectifier and fast transient potassium current. The inhibition is reversible and voltage-independent. It causes a depolarizing shift of the steady-state activation curve of the currents, without changing their steady-state inactivation behavior. This Olivierus martensii (Manchurian scorpion) protein is Potassium channel toxin alpha-KTx 17.1.